The following is a 322-amino-acid chain: Manganese-dependent ADP-ribose/CDP-alcohol diphosphatase (322 aa).

The Zn(2+) site is built by aspartate 13, glutamine 15, aspartate 60, asparagine 96, histidine 228, histidine 265, and histidine 267.

This sequence belongs to the ADPRibase-Mn family. Monomer. Mg(2+) is required as a cofactor.

It catalyses the reaction CDP-choline + H2O = phosphocholine + CMP + 2 H(+). The catalysed reaction is ADP-D-ribose + H2O = D-ribose 5-phosphate + AMP + 2 H(+). The enzyme catalyses CDP-glycerol + H2O = sn-glycerol 3-phosphate + CMP + 2 H(+). Its function is as follows. Hydrolyzes ADP-ribose, IDP-ribose, CDP-glycerol, CDP-choline and CDP-ethanolamine, but not other non-reducing ADP-sugars or CDP-glucose. The polypeptide is Manganese-dependent ADP-ribose/CDP-alcohol diphosphatase (adprm) (Danio rerio (Zebrafish)).